The primary structure comprises 378 residues: Tetraacyldisaccharide 4'-kinase (378 aa).

63–70 (AVGGAGKT) contributes to the ATP binding site.

This sequence belongs to the LpxK family.

It carries out the reaction a lipid A disaccharide + ATP = a lipid IVA + ADP + H(+). It participates in glycolipid biosynthesis; lipid IV(A) biosynthesis; lipid IV(A) from (3R)-3-hydroxytetradecanoyl-[acyl-carrier-protein] and UDP-N-acetyl-alpha-D-glucosamine: step 6/6. In terms of biological role, transfers the gamma-phosphate of ATP to the 4'-position of a tetraacyldisaccharide 1-phosphate intermediate (termed DS-1-P) to form tetraacyldisaccharide 1,4'-bis-phosphate (lipid IVA). The protein is Tetraacyldisaccharide 4'-kinase of Anaeromyxobacter sp. (strain K).